The chain runs to 284 residues: 4-hydroxybenzoate octaprenyltransferase (284 aa).

The next 8 helical transmembrane spans lie at 14-34 (VHQP…LWIT), 41-61 (FIVL…GCVI), 93-113 (WVFF…NNII), 134-154 (YIYL…LIVY), 166-186 (WLLF…YAMV), 209-229 (IVIG…GIVE), 233-253 (IIFY…QQVL), and 262-282 (CLWA…GIVL).

It belongs to the UbiA prenyltransferase family. Mg(2+) serves as cofactor.

Its subcellular location is the cell inner membrane. It catalyses the reaction all-trans-octaprenyl diphosphate + 4-hydroxybenzoate = 4-hydroxy-3-(all-trans-octaprenyl)benzoate + diphosphate. It participates in cofactor biosynthesis; ubiquinone biosynthesis. Functionally, catalyzes the prenylation of para-hydroxybenzoate (PHB) with an all-trans polyprenyl group. Mediates the second step in the final reaction sequence of ubiquinone-8 (UQ-8) biosynthesis, which is the condensation of the polyisoprenoid side chain with PHB, generating the first membrane-bound Q intermediate 3-octaprenyl-4-hydroxybenzoate. This is 4-hydroxybenzoate octaprenyltransferase from Blochmanniella floridana.